A 552-amino-acid chain; its full sequence is Dihydroxy-acid dehydratase (552 aa).

Aspartate 78 provides a ligand contact to Mg(2+). [2Fe-2S] cluster is bound at residue cysteine 119. Positions 120 and 121 each coordinate Mg(2+). At lysine 121 the chain carries N6-carboxylysine. Cysteine 191 is a binding site for [2Fe-2S] cluster. Glutamate 442 lines the Mg(2+) pocket. The active-site Proton acceptor is serine 468.

This sequence belongs to the IlvD/Edd family. Homodimer. It depends on [2Fe-2S] cluster as a cofactor. Mg(2+) is required as a cofactor.

The enzyme catalyses (2R)-2,3-dihydroxy-3-methylbutanoate = 3-methyl-2-oxobutanoate + H2O. It catalyses the reaction (2R,3R)-2,3-dihydroxy-3-methylpentanoate = (S)-3-methyl-2-oxopentanoate + H2O. It participates in amino-acid biosynthesis; L-isoleucine biosynthesis; L-isoleucine from 2-oxobutanoate: step 3/4. The protein operates within amino-acid biosynthesis; L-valine biosynthesis; L-valine from pyruvate: step 3/4. Functions in the biosynthesis of branched-chain amino acids. Catalyzes the dehydration of (2R,3R)-2,3-dihydroxy-3-methylpentanoate (2,3-dihydroxy-3-methylvalerate) into 2-oxo-3-methylpentanoate (2-oxo-3-methylvalerate) and of (2R)-2,3-dihydroxy-3-methylbutanoate (2,3-dihydroxyisovalerate) into 2-oxo-3-methylbutanoate (2-oxoisovalerate), the penultimate precursor to L-isoleucine and L-valine, respectively. This chain is Dihydroxy-acid dehydratase, found in Moorella thermoacetica (strain ATCC 39073 / JCM 9320).